Here is a 95-residue protein sequence, read N- to C-terminus: Pyrimidine/purine nucleoside phosphorylase (95 aa).

This sequence belongs to the nucleoside phosphorylase PpnP family.

It catalyses the reaction a purine D-ribonucleoside + phosphate = a purine nucleobase + alpha-D-ribose 1-phosphate. It carries out the reaction adenosine + phosphate = alpha-D-ribose 1-phosphate + adenine. The enzyme catalyses cytidine + phosphate = cytosine + alpha-D-ribose 1-phosphate. The catalysed reaction is guanosine + phosphate = alpha-D-ribose 1-phosphate + guanine. It catalyses the reaction inosine + phosphate = alpha-D-ribose 1-phosphate + hypoxanthine. It carries out the reaction thymidine + phosphate = 2-deoxy-alpha-D-ribose 1-phosphate + thymine. The enzyme catalyses uridine + phosphate = alpha-D-ribose 1-phosphate + uracil. The catalysed reaction is xanthosine + phosphate = alpha-D-ribose 1-phosphate + xanthine. Its function is as follows. Catalyzes the phosphorolysis of diverse nucleosides, yielding D-ribose 1-phosphate and the respective free bases. Can use uridine, adenosine, guanosine, cytidine, thymidine, inosine and xanthosine as substrates. Also catalyzes the reverse reactions. This chain is Pyrimidine/purine nucleoside phosphorylase, found in Edwardsiella ictaluri (strain 93-146).